The following is a 288-amino-acid chain: Alpha/beta hydrolase domain-containing protein 17B (288 aa).

Catalysis depends on charge relay system residues Ser-170, Asp-235, and His-264.

This sequence belongs to the AB hydrolase superfamily. ABHD17 family. In terms of processing, palmitoylated on cysteine residues located in a cysteine cluster at the N-terminus which promotes membrane localization.

Its subcellular location is the cell membrane. The protein localises to the recycling endosome membrane. It is found in the cell projection. The protein resides in the dendritic spine. It localises to the postsynaptic density membrane. It carries out the reaction S-hexadecanoyl-L-cysteinyl-[protein] + H2O = L-cysteinyl-[protein] + hexadecanoate + H(+). Functionally, hydrolyzes fatty acids from S-acylated cysteine residues in proteins. The polypeptide is Alpha/beta hydrolase domain-containing protein 17B (Xenopus tropicalis (Western clawed frog)).